We begin with the raw amino-acid sequence, 1439 residues long: Probable histone acetyltransferase HAC-like 2 (1439 aa).

Disordered regions lie at residues 1 to 43 and 313 to 335; these read MKQG…ASAD and YGISPNKPLQRHVNPSTRSTPTP. The span at 325 to 335 shows a compositional bias: polar residues; it reads VNPSTRSTPTP. The TAZ-type zinc finger occupies 607–687; that stretch reads ENTKQYHAQA…NEHCHVCCKA (81 aa). The PHD-type; degenerate zinc finger occupies 827-933; sequence KIHCHVQQET…EYTCFKCYIE (107 aa). The CBP/p300-type HAT domain occupies 948–1383; that stretch reads VRGAKDLPRT…MLYHLHNPTG (436 aa). Residues 964–989 are a coiled coil; the sequence is EERLFKRLREERQERANKLKTSLDEV. Acetyl-CoA-binding positions include 1071–1073, 1090–1091, and W1146; these read LDS and RT. A ZZ-type zinc finger spans residues 1265-1328; that stretch reads HLQYSCSHCC…ILHPVEIVGV (64 aa). Zn(2+) contacts are provided by C1270, C1273, C1285, C1288, C1294, C1297, H1310, and H1318.

Its subcellular location is the nucleus. The enzyme catalyses L-lysyl-[protein] + acetyl-CoA = N(6)-acetyl-L-lysyl-[protein] + CoA + H(+). In terms of biological role, acetyltransferase enzyme. Acetylates histones, giving a specific tag for transcriptional activation. The protein is Probable histone acetyltransferase HAC-like 2 of Oryza sativa subsp. japonica (Rice).